The chain runs to 157 residues: MNFYDFSAVKMNGETVSMSDYKGKVVIVVNTASKCGFTPQFEGLEKLYETYKDQGLEILGFPCNQFANQDAGENTEINEFCQLNYGVTFTMFQKIKVNGKEAHPLYQFLKKEAKGALSGTIKWNFTKFLIDRDGQVIERFAPKTEPEEMEEEIKKLL.

The active site involves C35.

Belongs to the glutathione peroxidase family.

It carries out the reaction 2 glutathione + H2O2 = glutathione disulfide + 2 H2O. This is Glutathione peroxidase (gpo) from Lactococcus lactis subsp. cremoris (strain MG1363).